An 867-amino-acid polypeptide reads, in one-letter code: Mitochondrial escape protein 2 (867 aa).

The transit peptide at 1–25 directs the protein to the mitochondrion; the sequence is MIIRTLRSQLRLPKPVYISPPCRYY. Residues 26–279 are Mitochondrial matrix-facing; it reads STDLEKLKKE…LVSLISNHTK (254 aa). Residues 179–264 form the RRM domain; that stretch reads GTPWIEDLRR…TTLHIQFVAI (86 aa). A helical membrane pass occupies residues 280 to 300; sequence IAIPVLIALLATFAVLIFDPI. Over 301-867 the chain is Mitochondrial intermembrane; it reads REWFIEYKIL…DGKSFLGIKF (567 aa). Residues 795-852 are a coiled coil; it reads IGRLISLEAAKIQKLEEELEKIYKIGKVDGRIDYVSQKIEASNKKILDLEKQAADVAS.

It belongs to the YME2 family.

The protein localises to the mitochondrion inner membrane. Functionally, plays a role in maintaining the mitochondrial genome and in controlling the mtDNA escape. Involved in the regulation of mtDNA nucleotide structure and number. May have a dispensable role in early maturation of pre-rRNA. The sequence is that of Mitochondrial escape protein 2 (PRP13) from Candida albicans (strain SC5314 / ATCC MYA-2876) (Yeast).